A 571-amino-acid polypeptide reads, in one-letter code: Cytoplasmic polyadenylation element-binding protein 2 (571 aa).

Disordered stretches follow at residues 1-23 (MSKS…NGDR) and 51-75 (FKQN…VSQE). The span at 61 to 75 (SESRHENEENKVSQE) shows a compositional bias: basic and acidic residues. Residues 435-517 (LVAFIGGVPR…KRVEIKPYFF (83 aa)) form the RRM domain.

Cytoplasmic polyadenylation element binding protein that binds to and regulates the translation of specific mRNAs. The polypeptide is Cytoplasmic polyadenylation element-binding protein 2 (cpb-2) (Caenorhabditis remanei (Caenorhabditis vulgaris)).